A 133-amino-acid polypeptide reads, in one-letter code: Small ribosomal subunit protein eS8 (133 aa).

A disordered region spans residues 1–31 (MGFYQGPDNRKITGGLKGKHRDKRKYEIGNP).

The protein belongs to the eukaryotic ribosomal protein eS8 family. Part of the 30S ribosomal subunit.

In Saccharolobus solfataricus (strain ATCC 35092 / DSM 1617 / JCM 11322 / P2) (Sulfolobus solfataricus), this protein is Small ribosomal subunit protein eS8.